Consider the following 212-residue polypeptide: Uridine kinase (212 aa).

G13–S20 contributes to the ATP binding site.

The protein belongs to the uridine kinase family.

The protein localises to the cytoplasm. The enzyme catalyses uridine + ATP = UMP + ADP + H(+). The catalysed reaction is cytidine + ATP = CMP + ADP + H(+). It participates in pyrimidine metabolism; CTP biosynthesis via salvage pathway; CTP from cytidine: step 1/3. The protein operates within pyrimidine metabolism; UMP biosynthesis via salvage pathway; UMP from uridine: step 1/1. The protein is Uridine kinase of Shewanella baltica (strain OS223).